Here is a 475-residue protein sequence, read N- to C-terminus: Eukaryotic translation initiation factor 2 subunit 3 (475 aa).

The tr-type G domain maps to 38–247 (QATINIGTIG…IVNKIPVPPR (210 aa)). The tract at residues 47-54 (GHVAHGKS) is G1. GTP is bound at residue 50-55 (AHGKST). The G2 stretch occupies residues 75 to 79 (NITIK). A G3 region spans residues 133-136 (DCPG). Residues 189–192 (NKID) and 224–226 (SAQ) each bind GTP. Residues 189–192 (NKID) form a G4 region. Residues 224–226 (SAQ) form a G5 region. Positions 456 to 468 (GQIFGGKTITPVL) are interacts with CDC123.

The protein belongs to the TRAFAC class translation factor GTPase superfamily. Classic translation factor GTPase family. EIF2G subfamily. Eukaryotic translation initiation factor 2 eIF2 is a heterotrimeric complex composed of an alpha, a beta and a gamma subunit. The factors eIF-1, eIF-2, eIF-3, TIF5/eIF-5 and methionyl-tRNAi form a multifactor complex (MFC) that may bind to the 40S ribosome.

It localises to the cytoplasm. The protein resides in the cytosol. The catalysed reaction is GTP + H2O = GDP + phosphate + H(+). Functionally, as a subunit of eukaryotic initiation factor 2 eIF2, involved in the early steps of protein synthesis. In the presence of GTP, eIF-2 forms a ternary complex with initiator tRNA Met-tRNAi and then recruits the 40S ribosomal complex and initiation factors eIF-1, eIF-1A and eIF-3 to form the 43S pre-initiation complex (43S PIC), a step that determines the rate of protein translation. The 43S PIC binds to mRNA and scans downstream to the initiation codon, where it forms a 48S initiation complex by codon-anticodon base pairing. This leads to the displacement of eIF-1 to allow GTPase-activating protein (GAP) eIF-5-mediated hydrolysis of eIF2-bound GTP. Hydrolysis of GTP and release of Pi, which makes GTP hydrolysis irreversible, causes the release of the eIF-2-GDP binary complex from the 40S subunit, an event that is essential for the subsequent joining of the 60S ribosomal subunit to form an elongation-competent 80S ribosome. In order for eIF-2 to recycle and catalyze another round of initiation, the GDP bound to eIF-2 must be exchanged with GTP by way of a reaction catalyzed by GDP-GTP exchange factor (GEF) eIF-2B. This Drosophila melanogaster (Fruit fly) protein is Eukaryotic translation initiation factor 2 subunit 3.